A 61-amino-acid polypeptide reads, in one-letter code: Large ribosomal subunit protein bL32 (61 aa).

Belongs to the bacterial ribosomal protein bL32 family.

This Ehrlichia canis (strain Jake) protein is Large ribosomal subunit protein bL32.